The primary structure comprises 317 residues: L-lactate dehydrogenase (317 aa).

Residues valine 16, aspartate 37, and tyrosine 69 each contribute to the NAD(+) site. Substrate-binding positions include glutamine 86, arginine 92, and 124 to 127; that span reads NPVD. Residues 122-124 and serine 147 contribute to the NAD(+) site; that span reads ASN. 152–155 is a binding site for substrate; sequence DSAR. Residue histidine 179 is the Proton acceptor of the active site. Tyrosine 223 bears the Phosphotyrosine mark. Substrate is bound at residue threonine 232.

This sequence belongs to the LDH/MDH superfamily. LDH family. In terms of assembly, homotetramer.

Its subcellular location is the cytoplasm. It catalyses the reaction (S)-lactate + NAD(+) = pyruvate + NADH + H(+). The protein operates within fermentation; pyruvate fermentation to lactate; (S)-lactate from pyruvate: step 1/1. Functionally, catalyzes the conversion of lactate to pyruvate. This is L-lactate dehydrogenase from Mycoplasma capricolum subsp. capricolum (strain California kid / ATCC 27343 / NCTC 10154).